Here is a 100-residue protein sequence, read N- to C-terminus: Small ribosomal subunit protein uS14 (100 aa).

The protein belongs to the universal ribosomal protein uS14 family. Part of the 30S ribosomal subunit. Contacts proteins S3 and S10.

Its function is as follows. Binds 16S rRNA, required for the assembly of 30S particles and may also be responsible for determining the conformation of the 16S rRNA at the A site. The protein is Small ribosomal subunit protein uS14 of Prochlorococcus marinus subsp. pastoris (strain CCMP1986 / NIES-2087 / MED4).